Here is a 376-residue protein sequence, read N- to C-terminus: Heme chaperone HemW (376 aa).

Positions 1–233 (MFTLPPISLY…DKLLKKAGYK (233 aa)) constitute a Radical SAM core domain. Position 10 (Tyr10) interacts with S-adenosyl-L-methionine. [4Fe-4S] cluster-binding residues include Cys16, Cys20, and Cys23. Residues Gly66, 67–68 (GT), Glu99, Gln126, Arg138, and Asp162 contribute to the S-adenosyl-L-methionine site.

Belongs to the anaerobic coproporphyrinogen-III oxidase family. HemW subfamily. The cofactor is [4Fe-4S] cluster.

Its subcellular location is the cytoplasm. Its function is as follows. Probably acts as a heme chaperone, transferring heme to an unknown acceptor. Binds one molecule of heme per monomer, possibly covalently. Binds 1 [4Fe-4S] cluster. The cluster is coordinated with 3 cysteines and an exchangeable S-adenosyl-L-methionine. The protein is Heme chaperone HemW of Buchnera aphidicola subsp. Acyrthosiphon pisum (strain APS) (Acyrthosiphon pisum symbiotic bacterium).